A 293-amino-acid chain; its full sequence is Sec-independent protein translocase protein TatC (293 aa).

Transmembrane regions (helical) follow at residues A35–I55, L87–A107, L123–F143, I173–I193, I204–P224, and I228–I248.

It belongs to the TatC family. In terms of assembly, the Tat system comprises two distinct complexes: a TatABC complex, containing multiple copies of TatA, TatB and TatC subunits, and a separate TatA complex, containing only TatA subunits. Substrates initially bind to the TatABC complex, which probably triggers association of the separate TatA complex to form the active translocon.

It is found in the cell membrane. Part of the twin-arginine translocation (Tat) system that transports large folded proteins containing a characteristic twin-arginine motif in their signal peptide across membranes. Together with TatB, TatC is part of a receptor directly interacting with Tat signal peptides. This is Sec-independent protein translocase protein TatC from Rothia mucilaginosa (strain DY-18) (Stomatococcus mucilaginosus).